Consider the following 213-residue polypeptide: NADH-quinone oxidoreductase subunit I (213 aa).

2 consecutive 4Fe-4S ferredoxin-type domains span residues 74-103 (RFIE…METS) and 113-142 (ENYS…HGTE). Residues cysteine 83, cysteine 86, cysteine 89, cysteine 93, cysteine 122, cysteine 125, cysteine 128, and cysteine 132 each contribute to the [4Fe-4S] cluster site.

Belongs to the complex I 23 kDa subunit family. NDH-1 is composed of 14 different subunits. Subunits NuoA, H, J, K, L, M, N constitute the membrane sector of the complex. It depends on [4Fe-4S] cluster as a cofactor.

The protein resides in the cell inner membrane. The enzyme catalyses a quinone + NADH + 5 H(+)(in) = a quinol + NAD(+) + 4 H(+)(out). Functionally, NDH-1 shuttles electrons from NADH, via FMN and iron-sulfur (Fe-S) centers, to quinones in the respiratory chain. The immediate electron acceptor for the enzyme in this species is believed to be ubiquinone. Couples the redox reaction to proton translocation (for every two electrons transferred, four hydrogen ions are translocated across the cytoplasmic membrane), and thus conserves the redox energy in a proton gradient. This Campylobacter jejuni subsp. jejuni serotype O:23/36 (strain 81-176) protein is NADH-quinone oxidoreductase subunit I.